Here is a 119-residue protein sequence, read N- to C-terminus: Holo-[acyl-carrier-protein] synthase (119 aa).

Residues Asp-8 and Glu-58 each contribute to the Mg(2+) site.

Belongs to the P-Pant transferase superfamily. AcpS family. Requires Mg(2+) as cofactor.

The protein resides in the cytoplasm. It carries out the reaction apo-[ACP] + CoA = holo-[ACP] + adenosine 3',5'-bisphosphate + H(+). Functionally, transfers the 4'-phosphopantetheine moiety from coenzyme A to a Ser of acyl-carrier-protein. The sequence is that of Holo-[acyl-carrier-protein] synthase from Streptococcus thermophilus (strain ATCC BAA-491 / LMD-9).